Here is a 53-residue protein sequence, read N- to C-terminus: UPF0391 membrane protein BURPS1106A_A2993 (53 aa).

A run of 2 helical transmembrane segments spans residues 5–25 (ALIF…GIAA) and 30–50 (IAKI…VLGV).

Belongs to the UPF0391 family.

Its subcellular location is the cell membrane. This is UPF0391 membrane protein BURPS1106A_A2993 from Burkholderia pseudomallei (strain 1106a).